A 232-amino-acid chain; its full sequence is Probable phospholipid hydroperoxide glutathione peroxidase 6, mitochondrial (232 aa).

The transit peptide at Met-1–Gly-54 directs the protein to the mitochondrion. Residue Cys-105 is part of the active site.

The protein belongs to the glutathione peroxidase family. In terms of tissue distribution, expressed at a low but detectable level in leaves, stems, and flowers, but at a higher level in siliques and even higher in roots. Predominantly expressed in seeds.

It is found in the mitochondrion. It carries out the reaction a hydroperoxy polyunsaturated fatty acid + 2 glutathione = a hydroxy polyunsaturated fatty acid + glutathione disulfide + H2O. Functionally, protects cells and enzymes from oxidative damage, by catalyzing the reduction of hydrogen peroxide, lipid peroxides and organic hydroperoxide, by glutathione. This chain is Probable phospholipid hydroperoxide glutathione peroxidase 6, mitochondrial (GPX6), found in Arabidopsis thaliana (Mouse-ear cress).